A 66-amino-acid polypeptide reads, in one-letter code: Large ribosomal subunit protein bL33c (66 aa).

It belongs to the bacterial ribosomal protein bL33 family.

It localises to the plastid. The protein resides in the chloroplast. In Nasturtium officinale (Watercress), this protein is Large ribosomal subunit protein bL33c.